A 681-amino-acid polypeptide reads, in one-letter code: DNA ligase (681 aa).

Residues 44-48 (DYIYD), 94-95 (SL), and Glu124 each bind NAD(+). The active-site N6-AMP-lysine intermediate is the Lys126. Positions 147, 181, 297, and 321 each coordinate NAD(+). Zn(2+)-binding residues include Cys415, Cys418, Cys433, and Cys438. In terms of domain architecture, BRCT spans 598 to 681 (DETSFFYGKK…EAQAKEGTDK (84 aa)).

This sequence belongs to the NAD-dependent DNA ligase family. LigA subfamily. The cofactor is Mg(2+). It depends on Mn(2+) as a cofactor.

It catalyses the reaction NAD(+) + (deoxyribonucleotide)n-3'-hydroxyl + 5'-phospho-(deoxyribonucleotide)m = (deoxyribonucleotide)n+m + AMP + beta-nicotinamide D-nucleotide.. DNA ligase that catalyzes the formation of phosphodiester linkages between 5'-phosphoryl and 3'-hydroxyl groups in double-stranded DNA using NAD as a coenzyme and as the energy source for the reaction. It is essential for DNA replication and repair of damaged DNA. The polypeptide is DNA ligase (Leuconostoc citreum (strain KM20)).